The following is a 137-amino-acid chain: Histone H2B.4 (137 aa).

A compositionally biased stretch (basic and acidic residues) spans 1–37 (MAPKAEKKPAEKKPTEEKAEKKPRAEKRVPGKEGGEK). Residues 1-45 (MAPKAEKKPAEKKPTEEKAEKKPRAEKRVPGKEGGEKKGKKKAKK) form a disordered region. Lys7 and Lys27 each carry N6-acetyllysine. Residue Lys133 forms a Glycyl lysine isopeptide (Lys-Gly) (interchain with G-Cter in ubiquitin) linkage.

This sequence belongs to the histone H2B family. The nucleosome is a histone octamer containing two molecules each of H2A, H2B, H3 and H4 assembled in one H3-H4 heterotetramer and two H2A-H2B heterodimers. The octamer wraps approximately 147 bp of DNA. Post-translationally, can be acetylated to form H2BK6ac and H2BK33ac. In terms of processing, monoubiquitinated to form H2BK143ub1; may give a specific tag for epigenetic transcriptional activation.

It is found in the nucleus. The protein resides in the chromosome. In terms of biological role, core component of nucleosome. Nucleosomes wrap and compact DNA into chromatin, limiting DNA accessibility to the cellular machineries which require DNA as a template. Histones thereby play a central role in transcription regulation, DNA repair, DNA replication and chromosomal stability. DNA accessibility is regulated via a complex set of post-translational modifications of histones, also called histone code, and nucleosome remodeling. The protein is Histone H2B.4 of Zea mays (Maize).